The primary structure comprises 552 residues: Membrane protein insertase YidC (552 aa).

The helical transmembrane segment at 3–23 (IKRTVLWVIFFMSAVMLFDNW) threads the bilayer. The disordered stretch occupies residues 36-59 (SATPTRTVGSAAPGTTTPGTQPAD). Positions 42 to 59 (TVGSAAPGTTTPGTQPAD) are enriched in low complexity. 3 helical membrane-spanning segments follow: residues 364-384 (WGWSIVLLTLLIKAVFFPLSA), 430-450 (FGGCLPVVIQIPVFISLYWVL), and 504-524 (MMFMPIAFSVMFFFFPAGLVL).

This sequence belongs to the OXA1/ALB3/YidC family. Type 1 subfamily. As to quaternary structure, interacts with the Sec translocase complex via SecD. Specifically interacts with transmembrane segments of nascent integral membrane proteins during membrane integration.

The protein localises to the cell inner membrane. Required for the insertion and/or proper folding and/or complex formation of integral membrane proteins into the membrane. Involved in integration of membrane proteins that insert both dependently and independently of the Sec translocase complex, as well as at least some lipoproteins. Aids folding of multispanning membrane proteins. In Paraburkholderia xenovorans (strain LB400), this protein is Membrane protein insertase YidC.